Here is a 487-residue protein sequence, read N- to C-terminus: uncharacterized protein (487 aa).

The first 31 residues, 1–31 (MRFHRQGISAIIGVLLIVLLGFCWKLSGSYG), serve as a signal peptide directing secretion. N-linked (GlcNAc...) asparagine glycosylation is found at N40, N68, N150, N220, N304, N367, N442, and N448. The disordered stretch occupies residues 141–176 (LERRHGRFGNGTNGDHPKGPPPPPPPPDEKGRGSQK).

N-glycosylated.

This is an uncharacterized protein from Saccharomyces cerevisiae (strain ATCC 204508 / S288c) (Baker's yeast).